The sequence spans 482 residues: Zinc finger CCCH domain-containing protein 40 (482 aa).

The C3H1-type zinc-finger motif lies at 157-184; that stretch reads RNRAHVCSFYVRGECTRGAECPYRHEMP. Residues 228–301 enclose the RRM domain; sequence RTLYIGGLNN…IRLKLMWGKP (74 aa). 2 stretches are compositionally biased toward low complexity: residues 329-347 and 389-428; these read SQQQ…GQQQ and PGPQ…YGGY. The disordered stretch occupies residues 329 to 482; the sequence is SQQQSGDQPQ…VPPPQQTTQN (154 aa). Pro residues predominate over residues 429–446; sequence MPPPRMPYPPPPQYPPYQ. A compositionally biased stretch (low complexity) spans 452 to 466; it reads PAQSQASSSQQPAPA. Positions 473 to 482 are enriched in pro residues; sequence VPPPQQTTQN.

The chain is Zinc finger CCCH domain-containing protein 40 from Oryza sativa subsp. japonica (Rice).